A 727-amino-acid chain; its full sequence is Sodium-dependent neutral amino acid transporter SLC6A17 (727 aa).

At M1–Q68 the chain is on the cytoplasmic side. Phosphoserine occurs at positions 13 and 20. A helical transmembrane segment spans residues Y69–L89. At C90–G96 the chain is on the extracellular side. Residues A97–L116 traverse the membrane as a helical segment. The Cytoplasmic segment spans residues E117–G140. The helical transmembrane segment at G141–I161 threads the bilayer. Residues G162–N224 are Extracellular-facing. The N-linked (GlcNAc...) asparagine glycan is linked to N186. The chain crosses the membrane as a helical span at residues W225 to V243. The Cytoplasmic portion of the chain corresponds to K244–K251. Residues V252–V269 traverse the membrane as a helical segment. Residues R270 to Q304 lie on the Extracellular side of the membrane. The chain crosses the membrane as a helical span at residues V305–Y322. Over N323–A333 the chain is Cytoplasmic. Residues A334–L355 form a helical membrane-spanning segment. Residues G356 to H451 lie on the Extracellular side of the membrane. Y377 is modified (phosphotyrosine). N393 carries an N-linked (GlcNAc...) asparagine glycan. A helical transmembrane segment spans residues F452–L471. Residues G472–E494 are Cytoplasmic-facing. Residues M495 to Q513 traverse the membrane as a helical segment. The Extracellular portion of the chain corresponds to R514–A528. Residues T529–T549 form a helical membrane-spanning segment. Residues K550 to F569 are Cytoplasmic-facing. Residues Y570–L591 traverse the membrane as a helical segment. Residues G592 to M618 lie on the Extracellular side of the membrane. Residues A619–F641 form a helical membrane-spanning segment. Over H642–L727 the chain is Cytoplasmic. Phosphoserine is present on residues S665 and S701. The disordered stretch occupies residues V680 to L727. The segment covering G698–N710 has biased composition (polar residues).

This sequence belongs to the sodium:neurotransmitter symporter (SNF) (TC 2.A.22) family. Expressed in the brain. The strongest expression levels in embryonic, postnatal, and adult stages are found in both cortical and hippocampal tissues.

The protein localises to the cytoplasmic vesicle. It localises to the secretory vesicle. Its subcellular location is the synaptic vesicle membrane. The protein resides in the postsynapse. It is found in the presynapse. It carries out the reaction L-proline(in) + Na(+)(in) = L-proline(out) + Na(+)(out). The enzyme catalyses L-leucine(in) + Na(+)(in) = L-leucine(out) + Na(+)(out). It catalyses the reaction glycine(in) + Na(+)(in) = glycine(out) + Na(+)(out). The catalysed reaction is L-alanine(in) + Na(+)(in) = L-alanine(out) + Na(+)(out). It carries out the reaction L-glutamine(in) + Na(+)(in) = L-glutamine(out) + Na(+)(out). Its function is as follows. Synaptic vesicle transporter with apparent selectivity for neutral amino acids. The transport is sodium-coupled but chloride-independent, likely driven by the proton electrochemical gradient generated by vacuolar H(+)-ATPase in an overall electrogenic mechanism. May contribute to the synaptic uptake of neurotransmitter precursors in a process coupled in part to vesicle exocytosis. The protein is Sodium-dependent neutral amino acid transporter SLC6A17 of Mus musculus (Mouse).